The sequence spans 629 residues: DNA-directed RNA polymerase subunit beta' (629 aa).

Zn(2+) contacts are provided by cysteine 70, cysteine 72, cysteine 85, and cysteine 88. Mg(2+) contacts are provided by aspartate 472, aspartate 474, and aspartate 476.

This sequence belongs to the RNA polymerase beta' chain family. RpoC1 subfamily. As to quaternary structure, in plastids the minimal PEP RNA polymerase catalytic core is composed of four subunits: alpha, beta, beta', and beta''. When a (nuclear-encoded) sigma factor is associated with the core the holoenzyme is formed, which can initiate transcription. Requires Mg(2+) as cofactor. Zn(2+) is required as a cofactor.

The protein localises to the plastid. The protein resides in the chloroplast. It carries out the reaction RNA(n) + a ribonucleoside 5'-triphosphate = RNA(n+1) + diphosphate. Functionally, DNA-dependent RNA polymerase catalyzes the transcription of DNA into RNA using the four ribonucleoside triphosphates as substrates. This Pyropia yezoensis (Susabi-nori) protein is DNA-directed RNA polymerase subunit beta'.